Consider the following 443-residue polypeptide: Threonine/serine transporter TdcC (443 aa).

A run of 11 helical transmembrane segments spans residues 22–42 (TTWT…FFPI), 44–64 (AGFG…PIAF), 97–117 (GVVI…IYGV), 140–160 (VVAL…KDLM), 163–183 (VMSY…LSLI), 207–227 (ILVT…FSPI), 259–279 (ASML…FTLS), 319–339 (ASII…LGTL), 366–386 (LSMV…PNIL), 389–409 (IEAM…MYAI), and 423–443 (DNLF…YKLF).

The protein belongs to the amino acid/polyamine transporter 2 family. SdaC/TdcC subfamily.

It is found in the cell inner membrane. It catalyses the reaction L-threonine(in) + H(+)(in) = L-threonine(out) + H(+)(out). The catalysed reaction is L-serine(in) + H(+)(in) = L-serine(out) + H(+)(out). Functionally, involved in the import of threonine and serine into the cell, with the concomitant import of a proton (symport system). The chain is Threonine/serine transporter TdcC from Klebsiella pneumoniae (strain 342).